Reading from the N-terminus, the 50-residue chain is Cuticle protein CP498 (50 aa).

2 consecutive repeat copies span residues 6–23 (ATVG…LIQL) and 30–47 (ILEG…FVTY).

Calcified shell.

The polypeptide is Cuticle protein CP498 (Cancer pagurus (Rock crab)).